Consider the following 486-residue polypeptide: MVATPSTSSQTKGVVRQVIGPVLDVEFPAGKLPKILNALRIEAKNPAGQEIALTAEVQQLLGDHRVRAVAMSGTDGLVRGMEAVDTGAPISVPVGEATLGRIFNVLGEPVDEQGPVKTKDTAPIHRAAPKLTDLETKPKVFETGIKVIDLLAPYRQGGKVGLFGGAGVGKTVLIQELINNIAKEHGGVSVFGGVGERTREGNDLYEEFKESGVINADDLTQSKVALCFGQMNEPPGARMRVGLSALTMAEHFRDVNKQDVLLFVDNIFRFVQAGSEVSALLGRMPSAVGYQPTLGTDVGELQERITSTLEGSITSIQAVYVPADDLTDPAPATTFAHLDATTVLARALAAKGIYPAVDPLDSTSTMLQPSVVGDEHYKTARAVQSTLQRYKELQDIIAILGLDELSEEDRLTVDRARKIEKFLSQPFFVAEIFTGMSGKYVKLEETIAGFNMILSGELDDLPEQAFYLVGNIDEVKAKAEKLKSEK.

ATP is bound at residue 164-171 (GGAGVGKT).

It belongs to the ATPase alpha/beta chains family. F-type ATPases have 2 components, CF(1) - the catalytic core - and CF(0) - the membrane proton channel. CF(1) has five subunits: alpha(3), beta(3), gamma(1), delta(1), epsilon(1). CF(0) has four main subunits: a(1), b(1), b'(1) and c(9-12).

The protein resides in the cellular thylakoid membrane. It carries out the reaction ATP + H2O + 4 H(+)(in) = ADP + phosphate + 5 H(+)(out). Functionally, produces ATP from ADP in the presence of a proton gradient across the membrane. The catalytic sites are hosted primarily by the beta subunits. The chain is ATP synthase subunit beta from Prochlorococcus marinus (strain MIT 9312).